We begin with the raw amino-acid sequence, 103 residues long: Co-chaperonin GroES (103 aa).

It belongs to the GroES chaperonin family. As to quaternary structure, heptamer of 7 subunits arranged in a ring. Interacts with the chaperonin GroEL.

Its subcellular location is the cytoplasm. Together with the chaperonin GroEL, plays an essential role in assisting protein folding. The GroEL-GroES system forms a nano-cage that allows encapsulation of the non-native substrate proteins and provides a physical environment optimized to promote and accelerate protein folding. GroES binds to the apical surface of the GroEL ring, thereby capping the opening of the GroEL channel. In Picosynechococcus sp. (strain ATCC 27264 / PCC 7002 / PR-6) (Agmenellum quadruplicatum), this protein is Co-chaperonin GroES.